Consider the following 169-residue polypeptide: Secretory-abundant heat soluble protein 1 (169 aa).

The N-terminal stretch at 1-19 (MSRAAVAIALLGCVVAAYG) is a signal peptide. The SAHS-c1 stretch occupies residues 31–60 (EWTGKSWMGKWESTDRIENFDAFISALGLP). Residues 75-103 (WKEGDHYHHQISVPDKNYKNDVNFKLNEE) form an SAHS-c2 region. Asn-109 carries N-linked (GlcNAc...) asparagine glycosylation. Residues 116 to 165 (KYTEDGGNLKAEVHVPSRNKVIHDEYKVNGDELEKTYKVGDVTAKRWYKK) are SAHS-c3.

The protein belongs to the Secretory-abundant heat soluble protein (SAHS) family.

It localises to the secreted. Functionally, secreted heat soluble protein acting as a molecular shield in water-deficient condition. Tardigrade-specific intrinsically disordered proteins (TDPs) are essential for desiccation tolerance by forming non-crystalline amorphous solids upon desiccation, and this vitrified state mirrors their protective capabilities. The chain is Secretory-abundant heat soluble protein 1 from Ramazzottius varieornatus (Water bear).